A 146-amino-acid chain; its full sequence is 3-hydroxyacyl-[acyl-carrier-protein] dehydratase FabZ (146 aa).

His-48 is an active-site residue.

This sequence belongs to the thioester dehydratase family. FabZ subfamily.

It localises to the cytoplasm. The enzyme catalyses a (3R)-hydroxyacyl-[ACP] = a (2E)-enoyl-[ACP] + H2O. Functionally, involved in unsaturated fatty acids biosynthesis. Catalyzes the dehydration of short chain beta-hydroxyacyl-ACPs and long chain saturated and unsaturated beta-hydroxyacyl-ACPs. The protein is 3-hydroxyacyl-[acyl-carrier-protein] dehydratase FabZ of Acetivibrio thermocellus (strain ATCC 27405 / DSM 1237 / JCM 9322 / NBRC 103400 / NCIMB 10682 / NRRL B-4536 / VPI 7372) (Clostridium thermocellum).